A 726-amino-acid chain; its full sequence is Probable alpha-galactosidase G (726 aa).

3 N-linked (GlcNAc...) asparagine glycosylation sites follow: asparagine 23, asparagine 166, and asparagine 456. Aspartate 485 acts as the Nucleophile in catalysis. Aspartate 547 acts as the Proton donor in catalysis. Asparagine 657 and asparagine 673 each carry an N-linked (GlcNAc...) asparagine glycan.

This sequence belongs to the glycosyl hydrolase 36 family. In terms of assembly, homotetramer. The cofactor is Mg(2+). NAD(+) is required as a cofactor.

It localises to the secreted. It catalyses the reaction Hydrolysis of terminal, non-reducing alpha-D-galactose residues in alpha-D-galactosides, including galactose oligosaccharides, galactomannans and galactolipids.. Hydrolyzes a variety of simple alpha-D-galactoside as well as more complex molecules such as oligosaccharides and polysaccharides. Not active on paranitrophenyl-alpha-galactoside and raffinose. The sequence is that of Probable alpha-galactosidase G (aglG) from Emericella nidulans (strain FGSC A4 / ATCC 38163 / CBS 112.46 / NRRL 194 / M139) (Aspergillus nidulans).